Here is a 404-residue protein sequence, read N- to C-terminus: Mitochondrial intermembrane space import and assembly protein 40 (404 aa).

The transit peptide at 1–34 (MVSAVSRQLVNRQLNRVLLRNARIAPFARATRFY) directs the protein to the mitochondrion. At 35–50 (SSKYAQESENAKRHKM) the chain is on the mitochondrial matrix side. A helical; Signal-anchor for type II membrane protein membrane pass occupies residues 51–71 (GLLIAGVAVAGAIVFVTPPQW). The Mitochondrial intermembrane portion of the chain corresponds to 72–404 (KKYFRAAKKV…PDEDTASKKD (333 aa)). The tract at residues 84-287 (VAESKEDPVS…SAYNPDTGEI (204 aa)) is disordered. The segment covering 101 to 113 (ESVQESTEEPQQS) has biased composition (low complexity). A compositionally biased stretch (polar residues) spans 124–135 (EQAQDESASSGD). 3 stretches are compositionally biased toward basic and acidic residues: residues 136 to 156 (SEAKKAHDEFADQNEASEKES), 226 to 237 (EEDKTPKAEELK), and 246 to 276 (EEPKKEDDSSKTIHSLNSEKDMEAVEEEVKQ). Cystine bridges form between C291-C293, C302-C335, and C312-C325. The 45-residue stretch at 299 to 343 (HGPCGEEFKAAFSCFVYSEAEPKGIDCVEKFQHMQDCFRRYPEHY) folds into the CHCH domain. 2 short sequence motifs (cx9C motif) span residues 302 to 312 (CGEEFKAAFSC) and 325 to 335 (CVEKFQHMQDC). Residues 346–404 (QLADPADDENVDHEKNLSEGKDTGVDSTPPKDEAYLKTEKEKKIEENASPDEDTASKKD) are disordered. A compositionally biased stretch (basic and acidic residues) spans 357–391 (DHEKNLSEGKDTGVDSTPPKDEAYLKTEKEKKIEE).

Monomer. The cofactor is Cu(2+). Zn(2+) serves as cofactor.

The protein localises to the mitochondrion inner membrane. In terms of biological role, required for the import and folding of small cysteine-containing proteins (small Tim) in the mitochondrial intermembrane space (IMS). Forms a redox cycle with ERV1 that involves a disulfide relay system. Precursor proteins to be imported into the IMS are translocated in their reduced form into the mitochondria. The oxidized form of MIA40 forms a transient intermolecular disulfide bridge with the reduced precursor protein, resulting in oxidation of the precursor protein that now contains an intramolecular disulfide bond and is able to undergo folding in the IMS. The sequence is that of Mitochondrial intermembrane space import and assembly protein 40 (MIA40) from Candida glabrata (strain ATCC 2001 / BCRC 20586 / JCM 3761 / NBRC 0622 / NRRL Y-65 / CBS 138) (Yeast).